The sequence spans 72 residues: Translation initiation factor IF-1 (72 aa).

In terms of domain architecture, S1-like spans 1 to 72; that stretch reads MAKEEVLEFP…TKGRITYRFK (72 aa).

Belongs to the IF-1 family. In terms of assembly, component of the 30S ribosomal translation pre-initiation complex which assembles on the 30S ribosome in the order IF-2 and IF-3, IF-1 and N-formylmethionyl-tRNA(fMet); mRNA recruitment can occur at any time during PIC assembly.

Its subcellular location is the cytoplasm. In terms of biological role, one of the essential components for the initiation of protein synthesis. Stabilizes the binding of IF-2 and IF-3 on the 30S subunit to which N-formylmethionyl-tRNA(fMet) subsequently binds. Helps modulate mRNA selection, yielding the 30S pre-initiation complex (PIC). Upon addition of the 50S ribosomal subunit IF-1, IF-2 and IF-3 are released leaving the mature 70S translation initiation complex. The sequence is that of Translation initiation factor IF-1 from Brucella abortus (strain 2308).